The sequence spans 464 residues: Lysosomal proton-coupled steroid conjugate and bile acid symporter SLC46A3 (464 aa).

Positions 1-26 (MRKVLLVEPVIFIYIFASSLTSPVVQ) are cleaved as a signal peptide. Residues 27-71 (QFIYRKLWEEEYNSTAISSDNSSHCERNKSSPTYVMEKAIQEKTS) lie on the Extracellular side of the membrane. Residues Asn39, Asn47, and Asn54 are each glycosylated (N-linked (GlcNAc...) asparagine). The chain crosses the membrane as a helical span at residues 72-92 (FFNMQLDLTGAVPSLIVAFII). Topologically, residues 93–104 (VANGDHQGRKKS) are cytoplasmic. Residues 105 to 125 (LVLPSIGALIADIFLTIVSYF) traverse the membrane as a helical segment. At 126–130 (SWPTS) the chain is on the extracellular side. Residues 131–151 (VLFLATFISGLFGSMATFLGG) traverse the membrane as a helical segment. Residues 152–171 (GFAYIADQCHDEKQKTTRIA) are Cytoplasmic-facing. The chain crosses the membrane as a helical span at residues 172-192 (VIDLIFGVVSGLAGLSSGYFL). Residues 193–198 (REMGFT) are Extracellular-facing. Residues 199-219 (WTFATASLLHVVNIIYITFFL) form a helical membrane-spanning segment. At 220 to 259 (QDTVHISEFQQQAPLSYKEHLKETFSGVYMLFKTAPSKKR) the chain is on the cytoplasmic side. The chain crosses the membrane as a helical span at residues 260–280 (ILIIVLLFIFMTYLFTMFGGS). At 281–296 (SLFTLYELDEPLCWTE) the chain is on the extracellular side. Residues 297-317 (VYIGYGAAAFTSISLTSFLGV) traverse the membrane as a helical segment. At 318 to 326 (YLFSKCLKD) the chain is on the cytoplasmic side. Residues 327–347 (IYIVFIGIFSYIGGIVMAAFA) form a helical membrane-spanning segment. The Extracellular segment spans residues 348–349 (KT). A helical membrane pass occupies residues 350-370 (TLLMFLVRVPSLFSIMPIPVL). Over 371-384 (RSMLSKVVLPSEQG) the chain is Cytoplasmic. A helical transmembrane segment spans residues 385 to 405 (AVFACIACLEVLTGTISLSVF). At 406-418 (NVIYAATVAWFSG) the chain is on the extracellular side. A helical transmembrane segment spans residues 419-439 (FSFLLSASLCLIPLGVLCWLL). Residues 440–464 (CTSWNGEDLALLVPEEVSSIDSVDS) are Cytoplasmic-facing.

This sequence belongs to the major facilitator superfamily. SLC46A family.

The protein localises to the lysosome membrane. It carries out the reaction estrone 3-sulfate(out) + n H(+)(out) = estrone 3-sulfate(in) + n H(+)(in). The enzyme catalyses 25-hydroxyvitamin D3 sulfate(out) + n H(+)(out) = 25-hydroxyvitamin D3 sulfate(in) + n H(+)(in). It catalyses the reaction cholate(out) + n H(+)(out) = cholate(in) + n H(+)(in). The catalysed reaction is glycocholate(out) + n H(+)(out) = glycocholate(in) + n H(+)(in). It carries out the reaction taurocholate(out) + n H(+)(out) = taurocholate(in) + n H(+)(in). The enzyme catalyses dehydroepiandrosterone 3-sulfate(out) + n H(+)(out) = dehydroepiandrosterone 3-sulfate(in) + n H(+)(in). Functionally, lysosomal proton-coupled steroid conjugate and bile acid transporter. Preferentially recognizes lipophilic steroid conjugates or bile acis as endogenous substrates and seems to mediate escape from lysosomes to the cytoplasm. Modulates hepatic cytosolic copper homeostasis, maybe acting as a lysosomal copper transporter and sequestering copper ions in the lysosome. In Gallus gallus (Chicken), this protein is Lysosomal proton-coupled steroid conjugate and bile acid symporter SLC46A3 (SLC46A3).